The chain runs to 437 residues: MPIIEESTMTYAEACRYFPGGVNSPIRACIPVGILPPIVSSAHRDIFIDSFGKTFIDFCGSWGSLIHGHGHPKILDVICNSASQGTSYGLTSENEISLAATLFSCLEFEDHKVRFVSSGTEATMTAVRLACATTGRSIMIKFLGCYHGHADVLLKGISIDESNIHQVPHIVDTYFSGNPYLPLNLILPYNDIQIFKEVMLQVGERVACVIFEPIAINMGVVLPKPGFIEGVITISRRFAALTIMDEVVTGFRMGIRGVRSIMDVDSDITVYGKILGGGMPVAAFLAHHRIMDHLLPLGQVFQAGTLSGNPIAMAVGKASLELCREVDFYPKLENLAQSFFAPIEEVICHQGFPVSLVRAGSMFSFFFRETPPTNLREVQECDHQMFGVFYRHVFAQGVYLSPAPMEASFLSSVHSKENLAYTQNVLIDSLMKTFGSL.

Position 273 is an N6-(pyridoxal phosphate)lysine (Lys273).

This sequence belongs to the class-III pyridoxal-phosphate-dependent aminotransferase family. HemL subfamily. In terms of assembly, homodimer. It depends on pyridoxal 5'-phosphate as a cofactor.

The protein resides in the cytoplasm. It carries out the reaction (S)-4-amino-5-oxopentanoate = 5-aminolevulinate. Its pathway is porphyrin-containing compound metabolism; protoporphyrin-IX biosynthesis; 5-aminolevulinate from L-glutamyl-tRNA(Glu): step 2/2. This Chlamydia abortus (strain DSM 27085 / S26/3) (Chlamydophila abortus) protein is Glutamate-1-semialdehyde 2,1-aminomutase.